The primary structure comprises 225 residues: UPF0758 protein Ssed_0385 (225 aa).

Residues 102–224 (ILSDPDLTRD…IVSFAERGWI (123 aa)) form the MPN domain. Residues histidine 173, histidine 175, and aspartate 186 each coordinate Zn(2+). Positions 173–186 (HNHPSGVAEPSLAD) match the JAMM motif motif.

It belongs to the UPF0758 family.

The protein is UPF0758 protein Ssed_0385 of Shewanella sediminis (strain HAW-EB3).